The sequence spans 143 residues: Ribosome-binding factor A (143 aa).

Positions 123–143 (VRAQAAQAKPAGEANPYKERN) are disordered. Over residues 124 to 136 (RAQAAQAKPAGEA) the composition is skewed to low complexity.

Belongs to the RbfA family. In terms of assembly, monomer. Binds 30S ribosomal subunits, but not 50S ribosomal subunits or 70S ribosomes.

The protein localises to the cytoplasm. Functionally, one of several proteins that assist in the late maturation steps of the functional core of the 30S ribosomal subunit. Associates with free 30S ribosomal subunits (but not with 30S subunits that are part of 70S ribosomes or polysomes). Required for efficient processing of 16S rRNA. May interact with the 5'-terminal helix region of 16S rRNA. In Corynebacterium urealyticum (strain ATCC 43042 / DSM 7109), this protein is Ribosome-binding factor A.